A 640-amino-acid chain; its full sequence is Threonine--tRNA ligase (640 aa).

A TGS domain is found at 1 to 59 (MKIKVKLPDGKEKEYDRGITPAEIAKELGIKKAIGAVVNGELWDLKRPIENDCELRLVT). The tract at residues 240 to 531 (DHRKLGPQLE…LIEHFAGAFP (292 aa)) is catalytic. Cys-332, His-383, and His-508 together coordinate Zn(2+).

The protein belongs to the class-II aminoacyl-tRNA synthetase family. Homodimer. Zn(2+) is required as a cofactor.

It is found in the cytoplasm. The catalysed reaction is tRNA(Thr) + L-threonine + ATP = L-threonyl-tRNA(Thr) + AMP + diphosphate + H(+). Its function is as follows. Catalyzes the attachment of threonine to tRNA(Thr) in a two-step reaction: L-threonine is first activated by ATP to form Thr-AMP and then transferred to the acceptor end of tRNA(Thr). Also edits incorrectly charged L-seryl-tRNA(Thr). The sequence is that of Threonine--tRNA ligase from Thermotoga maritima (strain ATCC 43589 / DSM 3109 / JCM 10099 / NBRC 100826 / MSB8).